We begin with the raw amino-acid sequence, 331 residues long: L-lactate dehydrogenase A chain (331 aa).

NAD(+)-binding positions include 29 to 57 (GMVG…MEDK) and Arg-98. Positions 105, 137, and 168 each coordinate substrate. Residue Asn-137 participates in NAD(+) binding. The Proton acceptor role is filled by His-192. Substrate is bound at residue Thr-247.

It belongs to the LDH/MDH superfamily. LDH family. In terms of assembly, homotetramer.

The protein localises to the cytoplasm. It carries out the reaction (S)-lactate + NAD(+) = pyruvate + NADH + H(+). It functions in the pathway fermentation; pyruvate fermentation to lactate; (S)-lactate from pyruvate: step 1/1. In terms of biological role, interconverts simultaneously and stereospecifically pyruvate and lactate with concomitant interconversion of NADH and NAD(+). The polypeptide is L-lactate dehydrogenase A chain (ldha) (Gobionotothen gibberifrons (Humped rockcod)).